The primary structure comprises 842 residues: Valine--tRNA ligase (842 aa).

The short motif at 86-96 is the 'HIGH' region element; that stretch reads PFTSGELHMGH. The 'KMSKS' region signature appears at 572–576; that stretch reads RMSKS. Lys575 is an ATP binding site.

The protein belongs to the class-I aminoacyl-tRNA synthetase family. ValS type 2 subfamily.

The protein resides in the cytoplasm. It catalyses the reaction tRNA(Val) + L-valine + ATP = L-valyl-tRNA(Val) + AMP + diphosphate. In terms of biological role, catalyzes the attachment of valine to tRNA(Val). As ValRS can inadvertently accommodate and process structurally similar amino acids such as threonine, to avoid such errors, it has a 'posttransfer' editing activity that hydrolyzes mischarged Thr-tRNA(Val) in a tRNA-dependent manner. The sequence is that of Valine--tRNA ligase from Saccharolobus solfataricus (strain ATCC 35092 / DSM 1617 / JCM 11322 / P2) (Sulfolobus solfataricus).